Reading from the N-terminus, the 96-residue chain is Neurotoxin 23 (96 aa).

Residues 1–22 form the signal peptide; it reads MKNIVIIITVAVLFNLFGESLQ. Residues 26–89 form the LCN-type CS-alpha/beta domain; it reads FETYPLNQDD…FLAEIIDTCN (64 aa). Cystine bridges form between Cys-40–Cys-63, Cys-49–Cys-68, and Cys-53–Cys-70.

Belongs to the long (3 C-C) scorpion toxin superfamily. Expressed by the venom gland.

The protein localises to the secreted. In Lychas mucronatus (Chinese swimming scorpion), this protein is Neurotoxin 23.